The primary structure comprises 57 residues: RPSFCNLPVKPGPCNGFFSAFYYSQKTNKCHSFTYGGCRGNANRFSTIEECRRTCVG.

The region spanning 5 to 55 (CNLPVKPGPCNGFFSAFYYSQKTNKCHSFTYGGCRGNANRFSTIEECRRTC) is the BPTI/Kunitz inhibitor domain. 3 cysteine pairs are disulfide-bonded: C5–C55, C14–C38, and C30–C51.

It belongs to the venom Kunitz-type family. In terms of tissue distribution, expressed by the venom gland.

The protein localises to the secreted. Its function is as follows. Interacts with vasopressin V2 receptor (V2R/AVPR2), probably in a selective manner. Inhibits vasopressin binding human V2R in the nanomolar range (Ki=8.16 nM), and also moderately inhibits vasopressin-induced cAMP production (IC(50)=224 nM). In vivo, intraperitoneal injection of this protein into rats increases diuresis by 5.5-fold, without any loss of electrolytes. This is Mambaquaretin-2 from Dendroaspis viridis (Western green mamba).